A 527-amino-acid chain; its full sequence is Eukaryotic translation initiation factor 2 subunit gamma (527 aa).

A disordered region spans residues 1–83 (MSDLQDQEPS…GLPEQPLNPD (83 aa)). A Phosphothreonine modification is found at Thr60. Residues 98–307 (QATINIGTIG…IVKTIPVPPR (210 aa)) form the tr-type G domain. The tract at residues 107 to 114 (GHVAHGKS) is G1. 110–115 (AHGKST) serves as a coordination point for GTP. The segment at 135–139 (NITIK) is G2. Positions 193–196 (DCPG) are G3. 249–252 (NKVD) serves as a coordination point for GTP. Positions 249-252 (NKVD) are G4. Ser258 carries the post-translational modification Phosphoserine. 284 to 286 (SAQ) serves as a coordination point for GTP. Residues 284–286 (SAQ) are G5. An interacts with CDC123 region spans residues 515-527 (ATIKKGTTLEPIA).

It belongs to the TRAFAC class translation factor GTPase superfamily. Classic translation factor GTPase family. EIF2G subfamily. As to quaternary structure, eukaryotic translation initiation factor 2 eIF2 is a heterotrimeric complex composed of an alpha, a beta and a gamma subunit. The factors eIF-1, eIF-1A, eIF-2, eIF-3, TIF5/eIF-5 and methionyl-tRNAi form a multifactor complex (MFC) that may bind to the 40S ribosome. Interacts (via C-terminus) with CDC123; the interaction is direct. Interacts with GCD1. Interacts with the eIF2B complex subunits GCD6 and GCD7. Interacts with methionyl-initiator methionine tRNA.

The protein resides in the cytoplasm. It localises to the cytosol. The catalysed reaction is GTP + H2O = GDP + phosphate + H(+). Functionally, as a subunit of eukaryotic initiation factor 2 eIF2, involved in the early steps of protein synthesis. In the presence of GTP, eIF-2 forms a ternary complex with initiator tRNA Met-tRNAi and then recruits the 40S ribosomal complex and initiation factors eIF-1, eIF-1A and eIF-3 to form the 43S pre-initiation complex (43S PIC), a step that determines the rate of protein translation. The 43S PIC binds to mRNA and scans downstream to the initiation codon, where it forms a 48S initiation complex by codon-anticodon base pairing. This leads to the displacement of eIF-1 to allow GTPase-activating protein (GAP) eIF-5-mediated hydrolysis of eIF2-bound GTP. Hydrolysis of GTP and release of Pi, which makes GTP hydrolysis irreversible, causes the release of the eIF-2-GDP binary complex from the 40S subunit, an event that is essential for the subsequent joining of the 60S ribosomal subunit to form an elongation-competent 80S ribosome. In order for eIF-2 to recycle and catalyze another round of initiation, the GDP bound to eIF-2 must be exchanged with GTP by way of a reaction catalyzed by GDP-GTP exchange factor (GEF) eIF-2B. This is Eukaryotic translation initiation factor 2 subunit gamma (GCD11) from Saccharomyces cerevisiae (strain ATCC 204508 / S288c) (Baker's yeast).